The chain runs to 439 residues: Enolase (439 aa).

Substrate contacts are provided by histidine 160 and glutamate 169. The Proton donor role is filled by glutamate 212. The Mg(2+) site is built by aspartate 247, glutamate 296, and aspartate 323. 2 residues coordinate substrate: glutamate 296 and aspartate 323. The active-site Proton acceptor is lysine 348. Substrate-binding positions include 375 to 378 (SHRS) and lysine 399.

Belongs to the enolase family. As to quaternary structure, homodimer. Mg(2+) is required as a cofactor.

Its subcellular location is the cytoplasm. It catalyses the reaction (2R)-2-phosphoglycerate = phosphoenolpyruvate + H2O. Its pathway is carbohydrate degradation; glycolysis; pyruvate from D-glyceraldehyde 3-phosphate: step 4/5. The chain is Enolase (ENO) from Rhodotorula mucilaginosa (Yeast).